The following is a 323-amino-acid chain: Pantothenate kinase (323 aa).

101-108 (GSVAVGKS) provides a ligand contact to ATP.

It belongs to the prokaryotic pantothenate kinase family.

It is found in the cytoplasm. It carries out the reaction (R)-pantothenate + ATP = (R)-4'-phosphopantothenate + ADP + H(+). It functions in the pathway cofactor biosynthesis; coenzyme A biosynthesis; CoA from (R)-pantothenate: step 1/5. This chain is Pantothenate kinase, found in Paenarthrobacter aurescens (strain TC1).